The chain runs to 450 residues: Solute carrier family 52, riboflavin transporter, member 2 (450 aa).

5 helical membrane passes run 14 to 34 (LLVALFGMGSWAAVNGIWVEL), 47 to 67 (LPSYLSVLVALGNLGLLLVTL), 86 to 106 (GLGIVGTGLLASLWNHVAPVA), 112 to 132 (VAFLTLAFVLALACCASNVTF), and 147 to 167 (FFLGQGLSALLPCVLALGQGV). Asn-178 carries N-linked (GlcNAc...) asparagine glycosylation. The chain crosses the membrane as a helical span at residues 201 to 221 (FFWVLTALLGTSAAAFQGLLL). Over residues 227-236 (TSEPTTGTGL) the composition is skewed to low complexity. The tract at residues 227–264 (TSEPTTGTGLRVETPGTEEEEEEEEASPLQEPPGQVAG) is disordered. Acidic residues predominate over residues 242–252 (GTEEEEEEEEA). The next 5 helical transmembrane spans lie at 282–302 (ACLLGLLAITNALTNGVLPAV), 317–337 (LAVVLGSCANPLACFLAMAVL), 344–364 (LCGLSLLGMLLGSYLMTLAAL), 369–389 (PLVGTSAGVVLVVLSWVLCAG), and 409–429 (ALLAAGVAIQVGSLLGAVAMF).

The protein belongs to the riboflavin transporter family.

The protein resides in the cell membrane. It carries out the reaction riboflavin(in) = riboflavin(out). With respect to regulation, riboflavin transport is Na(+)-independent but moderately pH-sensitive. Activity is strongly inhibited by riboflavin analogs, such as lumiflavin. Weakly inhibited by flavin adenine dinucleotide (FAD) and flavin mononucleotide (FMN). Plasma membrane transporter mediating the uptake by cells of the water soluble vitamin B2/riboflavin that plays a key role in biochemical oxidation-reduction reactions of the carbohydrate, lipid, and amino acid metabolism. May also act as a receptor for 4-hydroxybutyrate. This chain is Solute carrier family 52, riboflavin transporter, member 2 (Slc52a2), found in Mus musculus (Mouse).